The chain runs to 1711 residues: Hybrid PKS-NRPS synthetase TAS1 (1711 aa).

The interval 43-397 (APLSKMQRAL…RNGLNSEHRV (355 aa)) is condensation (C) domain. The interval 506 to 907 (QQQATLRPEQ…TVLLYGRINN (402 aa)) is adenylation (A) domain. The region spanning 1043–1119 (LEWAAAKARI…SQVGLVQSRR (77 aa)) is the Carrier 1 domain. O-(pantetheine 4'-phosphoryl)serine is present on Ser-1079. Polar residues predominate over residues 1114-1127 (LVQSRRGSSGSPRT). Residues 1114 to 1159 (LVQSRRGSSGSPRTVRSHARPQRKAKTPPRQARPETPESDYDQLPD) form a disordered region. Residues 1128–1140 (VRSHARPQRKAKT) are compositionally biased toward basic residues. The Carrier 2 domain maps to 1159–1236 (DLRDDVQQSI…AQVELLGRFT (78 aa)). An O-(pantetheine 4'-phosphoryl)serine modification is found at Ser-1195. The 418-residue stretch at 1266–1683 (REQYAIVGMS…GSTAHVVLSA (418 aa)) folds into the Ketosynthase family 3 (KS3) domain. Active-site for beta-ketoacyl synthase activity residues include Cys-1429, His-1565, and Asn-1608.

It in the N-terminal section; belongs to the NRP synthetase family. The cofactor is pantetheine 4'-phosphate.

It catalyses the reaction acetoacetyl-CoA + L-isoleucine + ATP = tenuazonic acid + AMP + diphosphate + CoA + 2 H(+). Hybrid PKS-NRPS synthetase that mediates the biosynthesis of the toxin tenuazonic acid (TeA), an inhibitor of protein biosynthesis on ribosomes by suppressing the release of new protein. TAS1 alone is sufficient for TeA synthesis via the condensation of isoleucine (Ile) with acetoacetyl-CoA by the N-terminal NRPS module and subsequent cyclization conducted by the C-terminal KS domain. The sequence is that of Hybrid PKS-NRPS synthetase TAS1 from Botryobasidium botryosum (strain FD-172 SS1).